Reading from the N-terminus, the 66-residue chain is Antimicrobial peptide Eval967 (66 aa).

Residues 1–22 (MKFSALLPVFFLLLAVIDYCQA) form the signal peptide. Leucine 36 bears the Leucine amide mark. Positions 37–66 (GKRDVKTQKYVDIKRRDLDLDDMLSKLFED) are excised as a propeptide.

Belongs to the non-disulfide-bridged peptide (NDBP) superfamily. Short antimicrobial peptide (group 4) family. As to expression, expressed by the venom gland.

It localises to the secreted. Probable antimicrobial peptide. Has no inhibitory activity against herpes simplex virus type 1 (HSV-1). In Euscorpiops validus (Scorpion), this protein is Antimicrobial peptide Eval967.